Here is a 102-residue protein sequence, read N- to C-terminus: Large ribosomal subunit protein bL21 (102 aa).

This sequence belongs to the bacterial ribosomal protein bL21 family. In terms of assembly, part of the 50S ribosomal subunit. Contacts protein L20.

In terms of biological role, this protein binds to 23S rRNA in the presence of protein L20. The sequence is that of Large ribosomal subunit protein bL21 from Geotalea daltonii (strain DSM 22248 / JCM 15807 / FRC-32) (Geobacter daltonii).